The chain runs to 273 residues: Mediator of RNA polymerase II transcription subunit 18 (273 aa).

The span at G90–S106 shows a compositional bias: low complexity. Residues G90 to F114 are disordered.

This sequence belongs to the Mediator complex subunit 18 family. As to quaternary structure, component of the Mediator complex.

It localises to the nucleus. Functionally, component of the Mediator complex, a coactivator involved in the regulated transcription of nearly all RNA polymerase II-dependent genes. Mediator functions as a bridge to convey information from gene-specific regulatory proteins to the basal RNA polymerase II transcription machinery. Mediator is recruited to promoters by direct interactions with regulatory proteins and serves as a scaffold for the assembly of a functional preinitiation complex with RNA polymerase II and the general transcription factors. In Aspergillus oryzae (strain ATCC 42149 / RIB 40) (Yellow koji mold), this protein is Mediator of RNA polymerase II transcription subunit 18 (srb5).